Here is a 248-residue protein sequence, read N- to C-terminus: Small ribosomal subunit protein uS2 (248 aa).

Belongs to the universal ribosomal protein uS2 family.

The polypeptide is Small ribosomal subunit protein uS2 (Alkalilimnicola ehrlichii (strain ATCC BAA-1101 / DSM 17681 / MLHE-1)).